A 421-amino-acid chain; its full sequence is Gamma-glutamyl phosphate reductase (421 aa).

This sequence belongs to the gamma-glutamyl phosphate reductase family.

It is found in the cytoplasm. It carries out the reaction L-glutamate 5-semialdehyde + phosphate + NADP(+) = L-glutamyl 5-phosphate + NADPH + H(+). It participates in amino-acid biosynthesis; L-proline biosynthesis; L-glutamate 5-semialdehyde from L-glutamate: step 2/2. In terms of biological role, catalyzes the NADPH-dependent reduction of L-glutamate 5-phosphate into L-glutamate 5-semialdehyde and phosphate. The product spontaneously undergoes cyclization to form 1-pyrroline-5-carboxylate. This is Gamma-glutamyl phosphate reductase from Shewanella pealeana (strain ATCC 700345 / ANG-SQ1).